Consider the following 105-residue polypeptide: Flowering-promoting factor 1-like protein 5 (105 aa).

This sequence belongs to the FPF1 family.

The polypeptide is Flowering-promoting factor 1-like protein 5 (Oryza sativa subsp. japonica (Rice)).